The chain runs to 380 residues: Anhydro-N-acetylmuramic acid kinase (380 aa).

9 to 16 (GTSADGVD) contributes to the ATP binding site.

Belongs to the anhydro-N-acetylmuramic acid kinase family.

The catalysed reaction is 1,6-anhydro-N-acetyl-beta-muramate + ATP + H2O = N-acetyl-D-muramate 6-phosphate + ADP + H(+). It participates in amino-sugar metabolism; 1,6-anhydro-N-acetylmuramate degradation. Its pathway is cell wall biogenesis; peptidoglycan recycling. Functionally, catalyzes the specific phosphorylation of 1,6-anhydro-N-acetylmuramic acid (anhMurNAc) with the simultaneous cleavage of the 1,6-anhydro ring, generating MurNAc-6-P. Is required for the utilization of anhMurNAc either imported from the medium or derived from its own cell wall murein, and thus plays a role in cell wall recycling. The polypeptide is Anhydro-N-acetylmuramic acid kinase (Synechococcus sp. (strain CC9902)).